Here is a 212-residue protein sequence, read N- to C-terminus: Uridine kinase (212 aa).

13–20 (GASASGKS) serves as a coordination point for ATP.

This sequence belongs to the uridine kinase family.

The protein localises to the cytoplasm. The enzyme catalyses uridine + ATP = UMP + ADP + H(+). The catalysed reaction is cytidine + ATP = CMP + ADP + H(+). Its pathway is pyrimidine metabolism; CTP biosynthesis via salvage pathway; CTP from cytidine: step 1/3. It participates in pyrimidine metabolism; UMP biosynthesis via salvage pathway; UMP from uridine: step 1/1. The protein is Uridine kinase of Shewanella piezotolerans (strain WP3 / JCM 13877).